Consider the following 95-residue polypeptide: Integration host factor subunit beta (95 aa).

Residues 56–76 (RAPRTGRNPKTGSSVDLEGKY) form a disordered region.

The protein belongs to the bacterial histone-like protein family. Heterodimer of an alpha and a beta chain.

Its function is as follows. This protein is one of the two subunits of integration host factor, a specific DNA-binding protein that functions in genetic recombination as well as in transcriptional and translational control. The protein is Integration host factor subunit beta of Shewanella baltica (strain OS223).